The sequence spans 477 residues: V-type ATP synthase beta chain (477 aa).

It belongs to the ATPase alpha/beta chains family.

Functionally, produces ATP from ADP in the presence of a proton gradient across the membrane. The V-type beta chain is a regulatory subunit. This chain is V-type ATP synthase beta chain, found in Anaeromyxobacter sp. (strain K).